The chain runs to 261 residues: Putative glyoxylase CFP32 (261 aa).

VOC domains follow at residues 11-129 (TPNW…LWQA) and 143-257 (TLIW…VLKP). Glyoxalase stretches follow at residues 13–123 (NWVD…TGAA) and 149–252 (LLTD…GAIF).

This Mycobacterium bovis (strain ATCC BAA-935 / AF2122/97) protein is Putative glyoxylase CFP32.